Consider the following 256-residue polypeptide: Pyrroloquinoline-quinone synthase (256 aa).

The protein belongs to the PqqC family.

It catalyses the reaction 6-(2-amino-2-carboxyethyl)-7,8-dioxo-1,2,3,4,7,8-hexahydroquinoline-2,4-dicarboxylate + 3 O2 = pyrroloquinoline quinone + 2 H2O2 + 2 H2O + H(+). It participates in cofactor biosynthesis; pyrroloquinoline quinone biosynthesis. Functionally, ring cyclization and eight-electron oxidation of 3a-(2-amino-2-carboxyethyl)-4,5-dioxo-4,5,6,7,8,9-hexahydroquinoline-7,9-dicarboxylic-acid to PQQ. This chain is Pyrroloquinoline-quinone synthase, found in Rhizobium meliloti (strain 1021) (Ensifer meliloti).